The following is a 29-amino-acid chain: Potassium channel toxin alpha-KTx 3.15 (29 aa).

C8 and C27 form a disulfide bridge.

The protein belongs to the short scorpion toxin superfamily. Potassium channel inhibitor family. Alpha-KTx 03 subfamily. Expressed by the venom gland.

It is found in the secreted. Functionally, may play a role in blocking voltage-gated potassium channels Kv1.1/KCNA1, Kv1.3/KCNA3 and Kv1.6/KCNA6. The sequence is that of Potassium channel toxin alpha-KTx 3.15 from Mesobuthus gibbosus (Mediterranean checkered scorpion).